The chain runs to 359 residues: Phospho-N-acetylmuramoyl-pentapeptide-transferase (359 aa).

Helical transmembrane passes span 21 to 41 (YITFRTIYASLTAFLICFLLG), 73 to 93 (TMGGLLIVFSVLVACLLWADL), 98 to 118 (IWVTLAALAGFTTIGFIDDYL), 143 to 163 (GICLLIFAASDTNTVLLVPFF), 166 to 186 (VAPDLGLFYIVLGVFVIVGTS), 202 to 222 (PLVISFVAYMVFAYVAGNAII), 237 to 257 (VTVFCGAMAGGLMGFLWFNAY), 261 to 281 (IFMGDVGSLSLGGALGTVAII), 286 to 306 (ILLTLVGGLFVVETLSVIFQV), and 336 to 356 (KIIVRFWIIAIALALIAVSTL).

This sequence belongs to the glycosyltransferase 4 family. MraY subfamily. Mg(2+) is required as a cofactor.

Its subcellular location is the cell inner membrane. The catalysed reaction is UDP-N-acetyl-alpha-D-muramoyl-L-alanyl-gamma-D-glutamyl-meso-2,6-diaminopimeloyl-D-alanyl-D-alanine + di-trans,octa-cis-undecaprenyl phosphate = di-trans,octa-cis-undecaprenyl diphospho-N-acetyl-alpha-D-muramoyl-L-alanyl-D-glutamyl-meso-2,6-diaminopimeloyl-D-alanyl-D-alanine + UMP. It participates in cell wall biogenesis; peptidoglycan biosynthesis. Catalyzes the initial step of the lipid cycle reactions in the biosynthesis of the cell wall peptidoglycan: transfers peptidoglycan precursor phospho-MurNAc-pentapeptide from UDP-MurNAc-pentapeptide onto the lipid carrier undecaprenyl phosphate, yielding undecaprenyl-pyrophosphoryl-MurNAc-pentapeptide, known as lipid I. In Desulfosudis oleivorans (strain DSM 6200 / JCM 39069 / Hxd3) (Desulfococcus oleovorans), this protein is Phospho-N-acetylmuramoyl-pentapeptide-transferase.